The chain runs to 212 residues: Nitrogen regulatory protein P-II homolog (212 aa).

Composition is skewed to low complexity over residues 1 to 12 (MSSPATAAAAAA), 32 to 46 (TTTT…SRSR), and 63 to 74 (PPTAARAQSAAA). Residues 1 to 68 (MSSPATAAAA…PRRLPPTAAR (68 aa)) constitute a chloroplast transit peptide. A disordered region spans residues 1 to 74 (MSSPATAAAA…TAARAQSAAA (74 aa)). ATP contacts are provided by residues 117 to 121 (GFGAQ) and 170 to 173 (GDGK). G119 contributes to the Mg(2+) binding site.

It belongs to the P(II) protein family. As to quaternary structure, homodimer.

It is found in the plastid. The protein localises to the chloroplast. Participates in sensing carbon and organic nitrogen status and regulates some steps of primary carbon and nitrogen metabolism. The chain is Nitrogen regulatory protein P-II homolog (GLB) from Oryza sativa subsp. japonica (Rice).